We begin with the raw amino-acid sequence, 306 residues long: Glutamyl-Q tRNA(Asp) synthetase (306 aa).

L-glutamate contacts are provided by residues 29-33 (RFAPS) and aspartate 65. The 'HIGH' region signature appears at 32 to 42 (PSPTGPLHLGN). Cysteine 121, cysteine 123, tyrosine 141, and cysteine 145 together coordinate Zn(2+). L-glutamate contacts are provided by tyrosine 188 and arginine 206. A 'KMSKS' region motif is present at residues 244-248 (KLAKR). Lysine 247 contributes to the ATP binding site.

Belongs to the class-I aminoacyl-tRNA synthetase family. GluQ subfamily. Zn(2+) is required as a cofactor.

Functionally, catalyzes the tRNA-independent activation of glutamate in presence of ATP and the subsequent transfer of glutamate onto a tRNA(Asp). Glutamate is transferred on the 2-amino-5-(4,5-dihydroxy-2-cyclopenten-1-yl) moiety of the queuosine in the wobble position of the QUC anticodon. The polypeptide is Glutamyl-Q tRNA(Asp) synthetase (Prochlorococcus marinus (strain MIT 9303)).